The chain runs to 316 residues: Olfactory receptor 4N4C (316 aa).

Topologically, residues 1-26 (MKIANNTVVTEFILLGLTQSQDIQLL) are cytoplasmic. A helical transmembrane segment spans residues 27–47 (VFVLILIFYLIILPGNFLIIF). Over 48–56 (TIRSDPGLT) the chain is Extracellular. Residues 57 to 77 (APLYLFLGNLAFLDASYSFIV) form a helical membrane-spanning segment. Residues 78–99 (APRMLVDFLSEKKVISYRGCIT) lie on the Cytoplasmic side of the membrane. C97 and C179 form a disulfide bridge. Residues 100-120 (QLFFLHFLGGGEGLLLVVMAF) traverse the membrane as a helical segment. At 121–143 (DRYIAICRPLHCSTVMNPRACYA) the chain is on the extracellular side. The helical transmembrane segment at 144–164 (MMLALWLGGFVHSIIQVVLIL) threads the bilayer. At 165 to 204 (RLPFCGPNQLDNFFCDVRQVIKLACTDMFVVELLMVFNSG) the chain is on the cytoplasmic side. The chain crosses the membrane as a helical span at residues 205–225 (LMTLLCFLGLLASYAVILCHV). Residues 226 to 243 (RRAASEGKNKAMSTCTTR) lie on the Extracellular side of the membrane. The helical transmembrane segment at 244-264 (VIIILLMFGPAIFIYICPFRA) threads the bilayer. Residues 265-268 (LPAD) are Cytoplasmic-facing. The helical transmembrane segment at 269–289 (KMVSLFHTVIFPLMNPMIYTL) threads the bilayer. Residues 290-316 (RNQEVKTSMKRLLSRHVVCQVDFIIRN) lie on the Extracellular side of the membrane.

This sequence belongs to the G-protein coupled receptor 1 family.

The protein resides in the membrane. Odorant receptor. This is Olfactory receptor 4N4C from Homo sapiens (Human).